Consider the following 179-residue polypeptide: Large ribosomal subunit protein bL17 (179 aa).

The interval 127–179 is disordered; sequence TDTLPDTVIDTGPDSAPDPVPGSEPGSAAGDLPDADTAPADPGESSSNQRVIR. Residues 154–168 are compositionally biased toward low complexity; sequence AAGDLPDADTAPADP. Positions 170-179 are enriched in polar residues; sequence ESSSNQRVIR.

Belongs to the bacterial ribosomal protein bL17 family. In terms of assembly, part of the 50S ribosomal subunit. Contacts protein L32.

The polypeptide is Large ribosomal subunit protein bL17 (Tropheryma whipplei (strain TW08/27) (Whipple's bacillus)).